We begin with the raw amino-acid sequence, 240 residues long: Seed lectin (240 aa).

Residue Asn-111 is glycosylated (N-linked (GlcNAc...) asparagine). The Mn(2+) site is built by Glu-123 and Asp-125. Residues Asp-125, Asn-129, and Asp-132 each coordinate Ca(2+). Mn(2+) is bound by residues Asp-132 and His-137. N-linked (GlcNAc...) asparagine glycosylation occurs at Asn-183.

This sequence belongs to the leguminous lectin family. As to quaternary structure, homotetramer. Partially N-glycosylated at Asn-111 and Asn-183 with the heptasaccharide [(beta-xylosyl-1,2)(alpha-mannosyl-1,6)(alpha-mannosyl-1,3)]beta-manosyl-1,4-GlcNAC-beta-1,4-GlcNAc-beta-1,4 [alpha-fucosyl-1,3]GlcNAc. A small proportion of alpha chains are proteolytically cleaved at 114-115 into gamma and beta chains. This is probably dependent on the deglycosylation of Asn-111. Seed.

Its function is as follows. Lectin that binds galactose. The protein is Seed lectin of Vatairea macrocarpa.